Here is an 865-residue protein sequence, read N- to C-terminus: Armadillo repeat-containing protein 2 (865 aa).

Disordered stretches follow at residues 39 to 75 (TVRT…FSVH) and 214 to 243 (SVPF…DQSR). A compositionally biased stretch (polar residues) spans 60–75 (SSRTPENRPPSSFSVH). ARM repeat units follow at residues 261-300 (IEVD…HALE), 303-343 (NMLG…ALKV), 362-402 (EKND…TIKF), 407-448 (PEFL…HLLV), 461-502 (PLAR…KLTS), 505-546 (DCCV…NLTA), 550-587 (QARE…GEGD), 589-614 (RPEA…NLAI), 617-660 (GVGP…NLSY), 662-703 (KVKN…NLSQ), 705-744 (HDIC…NLTV), and 746-788 (RDKR…NFSE).

Functionally, required for sperm flagellum axoneme organization and function. Involved in axonemal central pair complex assembly and/or stability. The polypeptide is Armadillo repeat-containing protein 2 (Bos taurus (Bovine)).